The chain runs to 642 residues: Tigger transposable element derived 5 (642 aa).

The interval 1–54 (MYPASPSAGPALHPVPHRARLPRPRCLAEPPRSPAPGPGSTARPPPPAPGPRPR) is disordered. Residues 31–52 (PRSPAPGPGSTARPPPPAPGPR) are compositionally biased toward pro residues. One can recognise an HTH psq-type domain in the interval 56–107 (AVKMTFRKAYSIKDKLQAIERVKGGERQASVCRDFGVPGGTLRGWLKDEPKL). DNA-binding regions (H-T-H motif) lie at residues 83–103 (QASV…WLKD) and 154–187 (PVIQ…WQKR). The 74-residue stretch at 121-194 (QRKKMRLANE…QKRHGISSQR (74 aa)) folds into the HTH CENPB-type domain. Over residues 198–208 (EAEPPVAGPAP) the composition is skewed to low complexity. A disordered region spans residues 198–230 (EAEPPVAGPAPVKEEPAQPSSAGLLLDGTPATL). A DDE-1 domain is found at 239-364 (DEQIYNANVT…CLQQKAVLLV (126 aa)). The segment at 543–583 (GLPEGCGEEVAPAAPPSPASLPSSIGAGEEEEEEATEQGGV) is disordered.

This sequence belongs to the tigger transposable element derived protein family.

Its subcellular location is the nucleus. The protein is Tigger transposable element derived 5 (Tigd5) of Rattus norvegicus (Rat).